The chain runs to 117 residues: Pre-mRNA-splicing factor ini1 (117 aa).

This sequence belongs to the PHF5 family.

The protein localises to the nucleus. Required for pre-mRNA splicing. The polypeptide is Pre-mRNA-splicing factor ini1 (ini1) (Schizosaccharomyces pombe (strain 972 / ATCC 24843) (Fission yeast)).